The sequence spans 373 residues: Flap endonuclease 1 (373 aa).

The interval Met-1–Arg-105 is N-domain. Mg(2+) is bound at residue Asp-34. The DNA site is built by Arg-47 and Arg-71. The Mg(2+) site is built by Asp-87, Glu-159, Glu-161, Asp-180, and Asp-182. The interval Asp-123 to His-254 is I-domain. Glu-159 serves as a coordination point for DNA. Residues Gly-232 and Asp-234 each coordinate DNA. Asp-234 lines the Mg(2+) pocket. An interaction with PCNA region spans residues Thr-340–Phe-348. The interval Phe-347–Lys-373 is disordered.

The protein belongs to the XPG/RAD2 endonuclease family. FEN1 subfamily. Interacts with PCNA. Three molecules of FEN1 bind to one PCNA trimer with each molecule binding to one PCNA monomer. PCNA stimulates the nuclease activity without altering cleavage specificity. Mg(2+) serves as cofactor. In terms of processing, phosphorylated. Phosphorylation upon DNA damage induces relocalization to the nuclear plasma.

It is found in the nucleus. The protein localises to the nucleolus. Its subcellular location is the nucleoplasm. The protein resides in the mitochondrion. Its function is as follows. Structure-specific nuclease with 5'-flap endonuclease and 5'-3' exonuclease activities involved in DNA replication and repair. During DNA replication, cleaves the 5'-overhanging flap structure that is generated by displacement synthesis when DNA polymerase encounters the 5'-end of a downstream Okazaki fragment. It enters the flap from the 5'-end and then tracks to cleave the flap base, leaving a nick for ligation. Also involved in the long patch base excision repair (LP-BER) pathway, by cleaving within the apurinic/apyrimidinic (AP) site-terminated flap. Acts as a genome stabilization factor that prevents flaps from equilibrating into structures that lead to duplications and deletions. Also possesses 5'-3' exonuclease activity on nicked or gapped double-stranded DNA, and exhibits RNase H activity. Also involved in replication and repair of rDNA and in repairing mitochondrial DNA. This chain is Flap endonuclease 1, found in Komagataella phaffii (strain GS115 / ATCC 20864) (Yeast).